Here is a 411-residue protein sequence, read N- to C-terminus: 2,3-bisphosphoglycerate-independent phosphoglycerate mutase 1 (411 aa).

This sequence belongs to the BPG-independent phosphoglycerate mutase family. A-PGAM subfamily. In terms of assembly, homotetramer. Mg(2+) serves as cofactor.

It carries out the reaction (2R)-2-phosphoglycerate = (2R)-3-phosphoglycerate. It participates in carbohydrate degradation; glycolysis; pyruvate from D-glyceraldehyde 3-phosphate: step 3/5. Inhibited to approximately 20% by EDTA. Catalyzes the interconversion of 2-phosphoglycerate and 3-phosphoglycerate. The sequence is that of 2,3-bisphosphoglycerate-independent phosphoglycerate mutase 1 (apgM1) from Methanocaldococcus jannaschii (strain ATCC 43067 / DSM 2661 / JAL-1 / JCM 10045 / NBRC 100440) (Methanococcus jannaschii).